A 697-amino-acid chain; its full sequence is Putative ATP-dependent RNA helicase an3 (697 aa).

The disordered stretch occupies residues 27–189; it reads ESGVAGTKGR…PLAPNDRVEQ (163 aa). Basic and acidic residues-rich tracts occupy residues 89–111, 135–144, and 151–170; these read GRSDRGFYDRENSGWNSGRDKDA, RRTDDRRQDG, and RSDKSGFGRFDRGNSRWSDD. The Q motif signature appears at 221–249; it reads ESFHDVTMGEIIMGNIQLTRYTRPTPVQK. Residues 241–248 and 265–272 each bind ATP; these read YTRPTPVQ and AQTGSGKT. Positions 252 to 444 constitute a Helicase ATP-binding domain; it reads IPIIIEKRDL…RDFLDEYIFL (193 aa). Residues 388–391 carry the DEAD box motif; that stretch reads DEAD. The 162-residue stretch at 455 to 616 folds into the Helicase C-terminal domain; it reads NITQKVVWVE…EVPSWLENMA (162 aa). The segment at 619–666 is disordered; it reads QHHKSSSRGRSKSRFSGGFGAKDYRQSSGAGSSFGSSRGGRSSGHGGS. The span at 622–631 shows a compositional bias: basic residues; it reads KSSSRGRSKS. The span at 645 to 654 shows a compositional bias: low complexity; it reads SSGAGSSFGS. Gly residues predominate over residues 655 to 666; the sequence is SRGGRSSGHGGS.

It belongs to the DEAD box helicase family. DDX3/DED1 subfamily.

It is found in the cell membrane. The protein resides in the nucleus. The protein localises to the cytoplasm. It localises to the stress granule. Its subcellular location is the inflammasome. It is found in the cell projection. The protein resides in the lamellipodium. It catalyses the reaction ATP + H2O = ADP + phosphate + H(+). Its function is as follows. Multifunctional ATP-dependent RNA helicase. The ATPase activity can be stimulated by various ribo-and deoxynucleic acids indicative for a relaxed substrate specificity. In vitro can unwind partially double-stranded DNA with a preference for 5'-single-stranded DNA overhangs. Involved in many cellular processes, which do not necessarily require its ATPase/helicase catalytic activities. Involved in the regulation of transcription and translation initiation. Involved in innate immunity. Involved in both stress and inflammatory responses. May negatively regulate extrinsic apoptotic signaling pathway via death domain receptors. May be involved in mitotic chromosome segregation. Required for canonical Wnt signaling involved in anteroposterior neural patterning. In Xenopus laevis (African clawed frog), this protein is Putative ATP-dependent RNA helicase an3 (an3).